Reading from the N-terminus, the 382-residue chain is D-galactonate dehydratase (382 aa).

Residue aspartate 183 coordinates Mg(2+). Residue histidine 185 is the Proton donor of the active site. Glutamate 209 and glutamate 235 together coordinate Mg(2+). Catalysis depends on histidine 285, which acts as the Proton acceptor.

Belongs to the mandelate racemase/muconate lactonizing enzyme family. GalD subfamily. Mg(2+) serves as cofactor.

It catalyses the reaction D-galactonate = 2-dehydro-3-deoxy-D-galactonate + H2O. The protein operates within carbohydrate acid metabolism; D-galactonate degradation; D-glyceraldehyde 3-phosphate and pyruvate from D-galactonate: step 1/3. Its function is as follows. Catalyzes the dehydration of D-galactonate to 2-keto-3-deoxy-D-galactonate. This Pectobacterium atrosepticum (strain SCRI 1043 / ATCC BAA-672) (Erwinia carotovora subsp. atroseptica) protein is D-galactonate dehydratase.